We begin with the raw amino-acid sequence, 223 residues long: Holliday junction branch migration complex subunit RuvA (223 aa).

The interval 1 to 67 (MIGWLKGEKI…EDGSNLFGFI (67 aa)) is domain I. Residues 68–146 (EKSERDLFRK…DFDLNNEFSP (79 aa)) are domain II. The segment at 147–157 (PTKLRPESAED) is flexible linker. Residues 158 to 223 (LNEELLTEIK…FKQALITLNK (66 aa)) are domain III.

This sequence belongs to the RuvA family. As to quaternary structure, homotetramer. Forms an RuvA(8)-RuvB(12)-Holliday junction (HJ) complex. HJ DNA is sandwiched between 2 RuvA tetramers; dsDNA enters through RuvA and exits via RuvB. An RuvB hexamer assembles on each DNA strand where it exits the tetramer. Each RuvB hexamer is contacted by two RuvA subunits (via domain III) on 2 adjacent RuvB subunits; this complex drives branch migration. In the full resolvosome a probable DNA-RuvA(4)-RuvB(12)-RuvC(2) complex forms which resolves the HJ.

It is found in the cytoplasm. Its function is as follows. The RuvA-RuvB-RuvC complex processes Holliday junction (HJ) DNA during genetic recombination and DNA repair, while the RuvA-RuvB complex plays an important role in the rescue of blocked DNA replication forks via replication fork reversal (RFR). RuvA specifically binds to HJ cruciform DNA, conferring on it an open structure. The RuvB hexamer acts as an ATP-dependent pump, pulling dsDNA into and through the RuvAB complex. HJ branch migration allows RuvC to scan DNA until it finds its consensus sequence, where it cleaves and resolves the cruciform DNA. In Prochlorococcus marinus (strain MIT 9211), this protein is Holliday junction branch migration complex subunit RuvA.